The following is a 368-amino-acid chain: Guanylate binding protein 128up (368 aa).

A (3S)-3-hydroxylysine modification is found at K22. The 226-residue stretch at 65-290 (ARVGFVGFPS…LLELMWEYLR (226 aa)) folds into the OBG-type G domain. GTP is bound by residues 71 to 78 (GFPSVGKS), 117 to 121 (DLPGI), and 248 to 251 (NKID). Positions 290-366 (RLQRIYTKPK…NDEDVVQIVK (77 aa)) constitute a TGS domain.

This sequence belongs to the TRAFAC class OBG-HflX-like GTPase superfamily. OBG GTPase family. Post-translationally, hydroxylated (with S stereochemistry) at C-3 of Lys-22 by JMJD7. Expressed in posterior-lateral epidermis of the maxillary lobe.

Catalyzes the conversion of GTP to GDP through hydrolysis of the gamma-phosphate bond in GTP. Dfd/deformed is required to activate 128up in maxillary segment cells. The chain is Guanylate binding protein 128up from Drosophila melanogaster (Fruit fly).